Consider the following 185-residue polypeptide: Ribosome maturation factor RimM (185 aa).

The PRC barrel domain maps to 92 to 168 (DDDTFYHADL…GRRVVVAEAF (77 aa)).

This sequence belongs to the RimM family. Binds ribosomal protein uS19.

It is found in the cytoplasm. An accessory protein needed during the final step in the assembly of 30S ribosomal subunit, possibly for assembly of the head region. Essential for efficient processing of 16S rRNA. May be needed both before and after RbfA during the maturation of 16S rRNA. It has affinity for free ribosomal 30S subunits but not for 70S ribosomes. The protein is Ribosome maturation factor RimM of Xanthobacter autotrophicus (strain ATCC BAA-1158 / Py2).